Reading from the N-terminus, the 227-residue chain is uncharacterized protein (227 aa).

The signal sequence occupies residues 1 to 25; that stretch reads MLIMKKLLLIAATSATMLSSSVSFA.

This sequence to R.conorii RC1281.

This is an uncharacterized protein from Rickettsia conorii (strain ATCC VR-613 / Malish 7).